The sequence spans 377 residues: MNALPSSAEFSRAVGGDAVSREAVIRIEHLSKTFSDAAGPVLDDVSLTIRRGEIHGIIGRSGAGKSTLVRCINLLERPSAGRVIVSGREITSLRGRALRNARRDIGMIFQHFNVLSSHTVAGNVALPFKVAGLPRAEIARRIPPLLELVGLAHKADAYPSELSGGQKQRVGIARALALDPSVLLCDEATSALDPETTDQILALLRDINRKLGLTIVLITHEMHVVRDIATRVAVLDHGRVVEEGATFDVLAFPKSAVARSFLSGLVAHELPPPVAAQLLPAAVPGSDPVLRIVFTGTAAHDPIVADLVSVFGIQPNILHGRIDYVGDRPLGVLTLVAGGAGEKLPAVLSHLSSLGLVVEVIGHAVRSAVARRHSAAR.

The ABC transporter domain occupies 25–262 (IRIEHLSKTF…PKSAVARSFL (238 aa)). Residue 59–66 (GRSGAGKS) participates in ATP binding.

This sequence belongs to the ABC transporter superfamily. Methionine importer (TC 3.A.1.24) family. In terms of assembly, the complex is composed of two ATP-binding proteins (MetN), two transmembrane proteins (MetI) and a solute-binding protein (MetQ).

The protein resides in the cell inner membrane. The catalysed reaction is L-methionine(out) + ATP + H2O = L-methionine(in) + ADP + phosphate + H(+). It catalyses the reaction D-methionine(out) + ATP + H2O = D-methionine(in) + ADP + phosphate + H(+). Part of the ABC transporter complex MetNIQ involved in methionine import. Responsible for energy coupling to the transport system. The sequence is that of Methionine import ATP-binding protein MetN 2 from Rhodopseudomonas palustris (strain ATCC BAA-98 / CGA009).